The primary structure comprises 354 residues: tRNA N6-adenosine threonylcarbamoyltransferase (354 aa).

The Fe cation site is built by histidine 115 and histidine 119. Substrate contacts are provided by residues 138 to 142 (LVSGG), aspartate 171, glycine 184, and asparagine 285. Position 313 (aspartate 313) interacts with Fe cation.

It belongs to the KAE1 / TsaD family. Fe(2+) is required as a cofactor.

The protein localises to the cytoplasm. It carries out the reaction L-threonylcarbamoyladenylate + adenosine(37) in tRNA = N(6)-L-threonylcarbamoyladenosine(37) in tRNA + AMP + H(+). Functionally, required for the formation of a threonylcarbamoyl group on adenosine at position 37 (t(6)A37) in tRNAs that read codons beginning with adenine. Is involved in the transfer of the threonylcarbamoyl moiety of threonylcarbamoyl-AMP (TC-AMP) to the N6 group of A37, together with TsaE and TsaB. TsaD likely plays a direct catalytic role in this reaction. The sequence is that of tRNA N6-adenosine threonylcarbamoyltransferase from Albidiferax ferrireducens (strain ATCC BAA-621 / DSM 15236 / T118) (Rhodoferax ferrireducens).